We begin with the raw amino-acid sequence, 218 residues long: Suppressor of silencing P0 (218 aa).

The 5-residue stretch at 63-67 (LPLHL) folds into the F-box-like domain.

The protein belongs to the polerovirus P0 protein family. As to quaternary structure, interacts (via F-box-like domain) with host AGO1; this interaction targets AGO1 for degradation, and thereby suppresses the silencing function of the latter. Interacts (via F-box-like domain) with host ASK1 and ASK2 (SKP proteins); these interactions are essential for viral pathogenicity. Part of a SCF P0 complex composed of P0 and the host proteins SKP and CUL1.

Its function is as follows. Suppressor of RNA-mediated gene silencing, also known as post-transcriptional gene silencing (PTGS), a mechanism of plant viral defense that limits the accumulation of viral RNAs. The P0 protein suppresses local PTGS using its F-box-like domain to mediate destabilization and degradation of the AGO1 protein. This Beet western yellows virus (isolate GB1) (BWYV) protein is Suppressor of silencing P0.